Reading from the N-terminus, the 141-residue chain is Small ribosomal subunit protein uS12 (141 aa).

Belongs to the universal ribosomal protein uS12 family. As to quaternary structure, part of the 30S ribosomal subunit.

Functionally, with S4 and S5 plays an important role in translational accuracy. Located at the interface of the 30S and 50S subunits. This Methanosphaera stadtmanae (strain ATCC 43021 / DSM 3091 / JCM 11832 / MCB-3) protein is Small ribosomal subunit protein uS12.